A 722-amino-acid polypeptide reads, in one-letter code: Endoglucanase F (722 aa).

The signal sequence occupies residues 1-29 (MSKNFKRVGAVAVAAAMSLSIMATTSINA). The disordered stretch occupies residues 142-165 (PEFQDPSKYPSPLDTSQPVGRDPI). The segment covering 154 to 165 (LDTSQPVGRDPI) has biased composition (polar residues). A Dockerin domain is found at 661 to 722 (PEKLLGDVNG…LLKKALLSIQ (62 aa)).

The protein belongs to the glycosyl hydrolase 48 (cellulase L) family.

It catalyses the reaction Endohydrolysis of (1-&gt;4)-beta-D-glucosidic linkages in cellulose, lichenin and cereal beta-D-glucans.. Functionally, probable endoglucanase involved in the degradation of cellulose or related beta-glucans. This is Endoglucanase F (celCCF) from Ruminiclostridium cellulolyticum (strain ATCC 35319 / DSM 5812 / JCM 6584 / H10) (Clostridium cellulolyticum).